The following is a 395-amino-acid chain: Calsequestrin-1 (395 aa).

Residues 1 to 28 (MNAADRMGARVALLLLLVLGSPQSGVHG) form the signal peptide. Tyr37 bears the Phosphotyrosine mark. At Ser75 the chain carries Phosphoserine. Phosphothreonine is present on Thr118. Ser210 carries the post-translational modification Phosphoserine. The N-linked (GlcNAc...) asparagine glycan is linked to Asn344. The disordered stretch occupies residues 376–395 (EGEINTEDDDDEDDDDDDDD).

Belongs to the calsequestrin family. Monomer; increases in response to a depletion of intracellular calcium. Homodimer. Homotetramer and homopolymer. Can form linear homooligomers. Ca(2+) ions promote oligomerization. Interacts (via C-terminal end and preferentially with the monomeric form) with STIM1; this interaction increases in response to a depletion of intracellular calcium, decreases both STIM1 aggregation and clustering, interaction of STIM1 with ORAI1 and store-operated Ca(2+) entry (SOCE) activity. Interacts with ASPH and TRDN. N-glycosylated. In terms of tissue distribution, detected in skeletal muscle (at protein level). Detected in skeletal muscle.

The protein resides in the endoplasmic reticulum. It localises to the sarcoplasmic reticulum. Its subcellular location is the sarcoplasmic reticulum lumen. The protein localises to the mitochondrion matrix. It is found in the sarcoplasmic reticulum membrane. Functionally, calsequestrin is a high-capacity, moderate affinity, calcium-binding protein and thus acts as an internal calcium store in muscle. Calcium ions are bound by clusters of acidic residues at the protein surface, often at the interface between subunits. Can bind around 80 Ca(2+) ions. Regulates the release of lumenal Ca(2+) via the calcium release channel RYR1; this plays an important role in triggering muscle contraction. Negatively regulates store-operated Ca(2+) entry (SOCE) activity. The chain is Calsequestrin-1 (CASQ1) from Oryctolagus cuniculus (Rabbit).